A 308-amino-acid polypeptide reads, in one-letter code: Probable 5-dehydro-4-deoxyglucarate dehydratase (308 aa).

The protein belongs to the DapA family.

The enzyme catalyses 5-dehydro-4-deoxy-D-glucarate + H(+) = 2,5-dioxopentanoate + CO2 + H2O. It participates in carbohydrate acid metabolism; D-glucarate degradation; 2,5-dioxopentanoate from D-glucarate: step 2/2. This Oceanobacillus iheyensis (strain DSM 14371 / CIP 107618 / JCM 11309 / KCTC 3954 / HTE831) protein is Probable 5-dehydro-4-deoxyglucarate dehydratase.